Consider the following 62-residue polypeptide: Guanine nucleotide-binding protein subunit gamma (62 aa).

A disordered region spans residues 40–62; that stretch reads DMLVSGPTDQHNPFQEKKSCSVL. Residues 53–62 are compositionally biased toward basic and acidic residues; the sequence is FQEKKSCSVL. A Cysteine methyl ester modification is found at cysteine 59. Residue cysteine 59 is the site of S-geranylgeranyl cysteine attachment. A propeptide spans 60–62 (removed in mature form); the sequence is SVL.

The protein belongs to the G protein gamma family. In terms of assembly, g proteins are composed of 3 units, alpha, beta and gamma. Interacts with gpb-1 and gpb-2. In terms of tissue distribution, predominantly expressed in the central nervous system.

It is found in the cell membrane. In terms of biological role, guanine nucleotide-binding proteins (G proteins) are involved as a modulator or transducer in various transmembrane signaling systems. The beta and gamma chains are required for the GTPase activity, for replacement of GDP by GTP, and for G protein-effector interaction. The polypeptide is Guanine nucleotide-binding protein subunit gamma (gpc-1) (Caenorhabditis elegans).